A 393-amino-acid polypeptide reads, in one-letter code: Yellow-related salivary protein SP03B (393 aa).

The first 18 residues, M1 to G18, serve as a signal peptide directing secretion. N-linked (GlcNAc...) asparagine glycosylation occurs at N29.

It belongs to the major royal jelly protein family. In terms of tissue distribution, female salivary gland (at protein level).

It localises to the secreted. In terms of biological role, probably modulates blood feeding of sand flies on vertebrate species by binding and sequestering different mediators involved in the host response. Binds biogenic amines. Binds serotonin with high affinity. Poorly binds histamine. Does not bind dopamine, noradrenaline, adrenaline and octopamine. This chain is Yellow-related salivary protein SP03B, found in Phlebotomus perniciosus (Phlebotomine sand fly).